The chain runs to 440 residues: Light-independent protochlorophyllide reductase subunit N (440 aa).

Residues Cys-15, Cys-40, and Cys-99 each coordinate [4Fe-4S] cluster.

The protein belongs to the BchN/ChlN family. In terms of assembly, protochlorophyllide reductase is composed of three subunits; BchL, BchN and BchB. Forms a heterotetramer of two BchB and two BchN subunits. Requires [4Fe-4S] cluster as cofactor.

It carries out the reaction chlorophyllide a + oxidized 2[4Fe-4S]-[ferredoxin] + 2 ADP + 2 phosphate = protochlorophyllide a + reduced 2[4Fe-4S]-[ferredoxin] + 2 ATP + 2 H2O. Its pathway is porphyrin-containing compound metabolism; bacteriochlorophyll biosynthesis (light-independent). Functionally, component of the dark-operative protochlorophyllide reductase (DPOR) that uses Mg-ATP and reduced ferredoxin to reduce ring D of protochlorophyllide (Pchlide) to form chlorophyllide a (Chlide). This reaction is light-independent. The NB-protein (BchN-BchB) is the catalytic component of the complex. The chain is Light-independent protochlorophyllide reductase subunit N from Heliobacterium mobile (Heliobacillus mobilis).